The chain runs to 376 residues: Probable allantoicase (376 aa).

The protein belongs to the allantoicase family.

The catalysed reaction is allantoate + H2O = (S)-ureidoglycolate + urea. It participates in nitrogen metabolism; (S)-allantoin degradation; (S)-ureidoglycolate from allantoate (aminidohydrolase route): step 1/1. This chain is Probable allantoicase, found in Streptomyces coelicolor (strain ATCC BAA-471 / A3(2) / M145).